The primary structure comprises 288 residues: NAD(P)H quinone oxidoreductase YCP4 (288 aa).

Residues 3–192 (IAIIQYSTYG…EIAEKQGEAF (190 aa)) enclose the Flavodoxin-like domain. FMN contacts are provided by residues 9–13 (STYGH) and 110–164 (VFVS…SPYG). Residues 202–288 (GSKKTNTTTT…KSSCSKCIIM (87 aa)) are disordered. Over residues 205 to 254 (KTNTTTTSKSAATSDAAGTTSGTAAGTSAATGAATGTSAPKESTKEASSS) the composition is skewed to low complexity. A compositionally biased stretch (polar residues) spans 261–288 (NGTATRTQQSTKAPETAEKSSCSKCIIM).

This sequence belongs to the WrbA family. FMN serves as cofactor.

It is found in the cell membrane. The enzyme catalyses a quinone + NADH + H(+) = a quinol + NAD(+). The catalysed reaction is a quinone + NADPH + H(+) = a quinol + NADP(+). Functionally, flavodoxin-like protein (FLP) that plays a role in cell wall integrity, oxidative stress protection and virulence. FLPs act as NAD(P)H quinone oxidoreductases. Reduces ubiquinone (coenzyme Q), enabling it to serve as an antioxidant in the membrane. The protein is NAD(P)H quinone oxidoreductase YCP4 of Candida albicans (strain SC5314 / ATCC MYA-2876) (Yeast).